A 508-amino-acid polypeptide reads, in one-letter code: Steroid 17-alpha-hydroxylase/17,20 lyase (508 aa).

Cys-442 contributes to the heme binding site.

Belongs to the cytochrome P450 family. The cofactor is heme.

The protein localises to the endoplasmic reticulum membrane. Its subcellular location is the microsome membrane. It carries out the reaction a C21-steroid + reduced [NADPH--hemoprotein reductase] + O2 = a 17alpha-hydroxy-C21-steroid + oxidized [NADPH--hemoprotein reductase] + H2O + H(+). It catalyses the reaction progesterone + reduced [NADPH--hemoprotein reductase] + O2 = 17alpha-hydroxyprogesterone + oxidized [NADPH--hemoprotein reductase] + H2O + H(+). The enzyme catalyses pregnenolone + reduced [NADPH--hemoprotein reductase] + O2 = 17alpha-hydroxypregnenolone + oxidized [NADPH--hemoprotein reductase] + H2O + H(+). The catalysed reaction is 17alpha-hydroxyprogesterone + reduced [NADPH--hemoprotein reductase] + O2 = androst-4-ene-3,17-dione + acetate + oxidized [NADPH--hemoprotein reductase] + H2O + 2 H(+). It carries out the reaction 17alpha-hydroxyprogesterone + reduced [NADPH--hemoprotein reductase] + O2 = 16alpha,17alpha-dihydroxyprogesterone + oxidized [NADPH--hemoprotein reductase] + H2O + H(+). It catalyses the reaction 16alpha,17alpha-dihydroxyprogesterone + reduced [NADPH--hemoprotein reductase] + O2 = 6beta,16alpha,17alpha-trihydroxyprogesterone + oxidized [NADPH--hemoprotein reductase] + H2O + H(+). The enzyme catalyses 17alpha-hydroxypregnenolone + reduced [NADPH--hemoprotein reductase] + O2 = 3beta-hydroxyandrost-5-en-17-one + acetate + oxidized [NADPH--hemoprotein reductase] + H2O + 2 H(+). The catalysed reaction is 16alpha,17alpha-dihydroxypregnenolone + reduced [NADPH--hemoprotein reductase] + O2 = 3beta,16alpha-dihydroxy-androst-5-en-17-one + acetate + oxidized [NADPH--hemoprotein reductase] + H2O + 2 H(+). It carries out the reaction 3beta-hydroxyandrost-5-en-17-one + reduced [NADPH--hemoprotein reductase] + O2 = 3beta,16alpha-dihydroxy-androst-5-en-17-one + oxidized [NADPH--hemoprotein reductase] + H2O + H(+). It catalyses the reaction androst-4-ene-3,17-dione + reduced [NADPH--hemoprotein reductase] + O2 = 16alpha-hydroxyandrost-4-ene-3,17-dione + oxidized [NADPH--hemoprotein reductase] + H2O + H(+). It functions in the pathway steroid hormone biosynthesis. It participates in steroid biosynthesis; glucocorticoid biosynthesis. Regulated predominantly by intracellular cAMP levels. The 17,20-lyase activity is stimulated by cytochrome b5, which acts as an allosteric effector increasing the Vmax of the lyase activity. A cytochrome P450 monooxygenase involved in corticoid and androgen biosynthesis. Catalyzes 17-alpha hydroxylation of C21 steroids, which is common for both pathways. A second oxidative step, required only for androgen synthesis, involves an acyl-carbon cleavage. The 17-alpha hydroxy intermediates, as part of adrenal glucocorticoids biosynthesis pathway, are precursors of cortisol. Hydroxylates steroid hormones, pregnenolone and progesterone to form 17-alpha hydroxy metabolites, followed by the cleavage of the C17-C20 bond to form C19 steroids, dehydroepiandrosterone (DHEA) and androstenedione. Has 16-alpha hydroxylase activity. Catalyzes 16-alpha hydroxylation of 17-alpha hydroxy pregnenolone, followed by the cleavage of the C17-C20 bond to form 16-alpha-hydroxy DHEA. Also 16-alpha hydroxylates androgens, relevant for estriol synthesis. Mechanistically, uses molecular oxygen inserting one oxygen atom into a substrate, and reducing the second into a water molecule, with two electrons provided by NADPH via cytochrome P450 reductase (CPR; NADPH-ferrihemoprotein reductase). The polypeptide is Steroid 17-alpha-hydroxylase/17,20 lyase (CYP17A1) (Equus caballus (Horse)).